The primary structure comprises 118 residues: UPF0344 protein RBAM_010920 (118 aa).

The next 4 membrane-spanning stretches (helical) occupy residues 4-24 (WHIT…GLYG), 33-53 (ITHM…AELF), 62-82 (EYAG…MLVI), and 93-113 (LWIG…HLPI).

Belongs to the UPF0344 family.

It localises to the cell membrane. The chain is UPF0344 protein RBAM_010920 from Bacillus velezensis (strain DSM 23117 / BGSC 10A6 / LMG 26770 / FZB42) (Bacillus amyloliquefaciens subsp. plantarum).